Consider the following 211-residue polypeptide: RILP-like protein 2 (211 aa).

The segment at 1-32 (MEEPPVREEEEEEGEEDEERDEVGPEGALGKS) is disordered. Over residues 8–21 (EEEEEEGEEDEERD) the composition is skewed to acidic residues. The RH1 domain maps to 24-106 (GPEGALGKSP…RKEVEGLRRQ (83 aa)). Residues 70–164 (RVLEMLEALV…VQEELQCYKS (95 aa)) adopt a coiled-coil conformation. Residue S107 is modified to Phosphoserine. The RH2 domain maps to 130–201 (RPRFTLQELR…NKEEKTIIKK (72 aa)). A disordered region spans residues 166–190 (LIPPREGPGGRREKDAVVTSAKNAG).

This sequence belongs to the RILPL family. Homodimer. Interacts with RAC1. Interacts (via N-terminus) with MYO5A, the interaction is required for its role in dendrite formation. Interacts with RAB8A; interaction is dependent on the phosphorylation of RAB8A on 'Thr-72'. Interacts with RAB10 and RAB12; interaction is dependent on the phosphorylation of 'Thr-73' on RAB10 and 'Ser-105' on RAB12. In terms of tissue distribution, widely expressed. Expressed at higher level in lung.

The protein resides in the cytoplasm. Its subcellular location is the cytosol. It is found in the cytoskeleton. The protein localises to the microtubule organizing center. It localises to the centrosome. The protein resides in the cell projection. Its subcellular location is the cilium. Involved in cell shape and neuronal morphogenesis, positively regulating the establishment and maintenance of dendritic spines. Plays a role in cellular protein transport, including protein transport away from primary cilia. May function via activation of RAC1 and PAK1. In Homo sapiens (Human), this protein is RILP-like protein 2 (RILPL2).